The primary structure comprises 188 residues: Elongation factor P (188 aa).

This sequence belongs to the elongation factor P family.

Its subcellular location is the cytoplasm. Its pathway is protein biosynthesis; polypeptide chain elongation. Its function is as follows. Involved in peptide bond synthesis. Stimulates efficient translation and peptide-bond synthesis on native or reconstituted 70S ribosomes in vitro. Probably functions indirectly by altering the affinity of the ribosome for aminoacyl-tRNA, thus increasing their reactivity as acceptors for peptidyl transferase. The sequence is that of Elongation factor P from Chlorobium phaeobacteroides (strain DSM 266 / SMG 266 / 2430).